Here is a 299-residue protein sequence, read N- to C-terminus: ATP synthase gamma chain (299 aa).

It belongs to the ATPase gamma chain family. As to quaternary structure, F-type ATPases have 2 components, CF(1) - the catalytic core - and CF(0) - the membrane proton channel. CF(1) has five subunits: alpha(3), beta(3), gamma(1), delta(1), epsilon(1). CF(0) has three main subunits: a, b and c.

It localises to the cell inner membrane. Functionally, produces ATP from ADP in the presence of a proton gradient across the membrane. The gamma chain is believed to be important in regulating ATPase activity and the flow of protons through the CF(0) complex. The protein is ATP synthase gamma chain of Rhodospirillum rubrum.